The sequence spans 125 residues: Small ribosomal subunit protein uS12m (125 aa).

Residues 1–27 (MPTKNQLIRHGREEKRRTDRTRALDQC) form a disordered region. Positions 10–23 (HGREEKRRTDRTRA) are enriched in basic and acidic residues.

This sequence belongs to the universal ribosomal protein uS12 family.

It localises to the mitochondrion. In terms of biological role, protein S12 is involved in the translation initiation step. The chain is Small ribosomal subunit protein uS12m (RPS12) from Triticum aestivum (Wheat).